A 193-amino-acid chain; its full sequence is dCTP deaminase (193 aa).

Residues 110 to 115 (RSSLAR), D128, 136 to 138 (VLE), Y171, K178, and Q182 each bind dCTP. E138 functions as the Proton donor/acceptor in the catalytic mechanism. Residues 169 to 193 (RPYNRREDAKYRNQQGAVASRIDKD) are disordered.

The protein belongs to the dCTP deaminase family. In terms of assembly, homotrimer.

The catalysed reaction is dCTP + H2O + H(+) = dUTP + NH4(+). It functions in the pathway pyrimidine metabolism; dUMP biosynthesis; dUMP from dCTP (dUTP route): step 1/2. Its function is as follows. Catalyzes the deamination of dCTP to dUTP. In Escherichia coli O8 (strain IAI1), this protein is dCTP deaminase.